The chain runs to 142 residues: Putative pre-16S rRNA nuclease (142 aa).

This sequence belongs to the YqgF nuclease family.

The protein resides in the cytoplasm. Its function is as follows. Could be a nuclease involved in processing of the 5'-end of pre-16S rRNA. The chain is Putative pre-16S rRNA nuclease from Staphylococcus carnosus (strain TM300).